A 785-amino-acid chain; its full sequence is Solute carrier family 45 member 4 (785 aa).

A disordered region spans residues Met1–Gly43. 6 helical membrane passes run Glu64 to Pro84, Tyr87 to Gly107, Ile124 to Ile144, Pro156 to Thr176, Leu197 to Leu217, and Val234 to Ile254. 2 disordered regions span residues Tyr259 to Glu309 and Lys401 to Met430. A phosphoserine mark is found at Ser442 and Ser472. The disordered stretch occupies residues Asp478 to Gly505. Residues Gln490–Asp499 are compositionally biased toward low complexity. Residue Ser502 is modified to Phosphoserine. A run of 6 helical transmembrane segments spans residues Leu525–Phe545, Met577–Gln597, Ile609–Pro629, Val631–Cys651, Ile683–Val703, and Ile709–Phe729. The tract at residues Lys741–Lys772 is disordered. Residue Ser749 is modified to Phosphoserine.

It belongs to the glycoside-pentoside-hexuronide (GPH) cation symporter transporter (TC 2.A.2) family. As to expression, ubiquitously expressed.

It localises to the membrane. It catalyses the reaction sucrose(out) + H(+)(out) = sucrose(in) + H(+)(in). Proton-associated sucrose transporter. May be able to transport also glucose and fructose. The protein is Solute carrier family 45 member 4 (Slc45a4) of Mus musculus (Mouse).